The primary structure comprises 205 residues: Holliday junction branch migration complex subunit RuvA (205 aa).

A domain I region spans residues 1–64 (MIGRLRGIIL…EDAQLLFGFI (64 aa)). The domain II stretch occupies residues 65–143 (HKQERVLFRE…GLSGDLFVPQ (79 aa)). Residues 144 to 156 (GAGEIPAAIDAPA) are flexible linker. Residues 157 to 205 (MPADPEGEAVAALVALGYKPQEASRMVSKVASAGSDCEMLIRDALRAAL) form a domain III region.

Belongs to the RuvA family. As to quaternary structure, homotetramer. Forms an RuvA(8)-RuvB(12)-Holliday junction (HJ) complex. HJ DNA is sandwiched between 2 RuvA tetramers; dsDNA enters through RuvA and exits via RuvB. An RuvB hexamer assembles on each DNA strand where it exits the tetramer. Each RuvB hexamer is contacted by two RuvA subunits (via domain III) on 2 adjacent RuvB subunits; this complex drives branch migration. In the full resolvosome a probable DNA-RuvA(4)-RuvB(12)-RuvC(2) complex forms which resolves the HJ.

It is found in the cytoplasm. Functionally, the RuvA-RuvB-RuvC complex processes Holliday junction (HJ) DNA during genetic recombination and DNA repair, while the RuvA-RuvB complex plays an important role in the rescue of blocked DNA replication forks via replication fork reversal (RFR). RuvA specifically binds to HJ cruciform DNA, conferring on it an open structure. The RuvB hexamer acts as an ATP-dependent pump, pulling dsDNA into and through the RuvAB complex. HJ branch migration allows RuvC to scan DNA until it finds its consensus sequence, where it cleaves and resolves the cruciform DNA. This chain is Holliday junction branch migration complex subunit RuvA, found in Sodalis glossinidius (strain morsitans).